Consider the following 260-residue polypeptide: Glutamate racemase (260 aa).

Residues 14 to 15 (DS) and 46 to 47 (YG) each bind substrate. Cys77 (proton donor/acceptor) is an active-site residue. 78-79 (NT) provides a ligand contact to substrate. Catalysis depends on Cys188, which acts as the Proton donor/acceptor. Residue 189-190 (TH) coordinates substrate.

This sequence belongs to the aspartate/glutamate racemases family.

It catalyses the reaction L-glutamate = D-glutamate. It participates in cell wall biogenesis; peptidoglycan biosynthesis. Functionally, provides the (R)-glutamate required for cell wall biosynthesis. The polypeptide is Glutamate racemase (Clostridium perfringens (strain 13 / Type A)).